Consider the following 358-residue polypeptide: Phosphoserine aminotransferase (358 aa).

Arg41 is an L-glutamate binding site. Residues 75 to 76 (AS), Trp100, Thr148, Asp167, and Gln190 contribute to the pyridoxal 5'-phosphate site. An N6-(pyridoxal phosphate)lysine modification is found at Lys191. 233–234 (NT) is a binding site for pyridoxal 5'-phosphate.

The protein belongs to the class-V pyridoxal-phosphate-dependent aminotransferase family. SerC subfamily. Homodimer. The cofactor is pyridoxal 5'-phosphate.

It localises to the cytoplasm. It carries out the reaction O-phospho-L-serine + 2-oxoglutarate = 3-phosphooxypyruvate + L-glutamate. The catalysed reaction is 4-(phosphooxy)-L-threonine + 2-oxoglutarate = (R)-3-hydroxy-2-oxo-4-phosphooxybutanoate + L-glutamate. It functions in the pathway amino-acid biosynthesis; L-serine biosynthesis; L-serine from 3-phospho-D-glycerate: step 2/3. Its pathway is cofactor biosynthesis; pyridoxine 5'-phosphate biosynthesis; pyridoxine 5'-phosphate from D-erythrose 4-phosphate: step 3/5. Catalyzes the reversible conversion of 3-phosphohydroxypyruvate to phosphoserine and of 3-hydroxy-2-oxo-4-phosphonooxybutanoate to phosphohydroxythreonine. The protein is Phosphoserine aminotransferase of Campylobacter jejuni subsp. jejuni serotype O:23/36 (strain 81-176).